Consider the following 206-residue polypeptide: Isochorismatase domain-containing protein 2A (206 aa).

Lysine 26 is modified (N6-succinyllysine). Residues lysine 93 and lysine 178 each carry the N6-acetyllysine; alternate modification. N6-succinyllysine; alternate occurs at positions 93 and 178. N6-acetyllysine is present on residues lysine 182 and lysine 185.

It belongs to the isochorismatase family. In terms of assembly, interacts with CDKN2A. In terms of tissue distribution, ubiquitous. Expressed predominantly in uterus, stomach and urinary tract.

It is found in the cytoplasm. It localises to the nucleus. The protein is Isochorismatase domain-containing protein 2A of Mus musculus (Mouse).